A 142-amino-acid polypeptide reads, in one-letter code: Nucleoside diphosphate kinase (142 aa).

ATP is bound by residues Lys11, Phe59, Arg87, Thr93, Arg104, and Asn114. The active-site Pros-phosphohistidine intermediate is His117.

Belongs to the NDK family. As to quaternary structure, homotetramer. Requires Mg(2+) as cofactor.

It is found in the cytoplasm. The catalysed reaction is a 2'-deoxyribonucleoside 5'-diphosphate + ATP = a 2'-deoxyribonucleoside 5'-triphosphate + ADP. It carries out the reaction a ribonucleoside 5'-diphosphate + ATP = a ribonucleoside 5'-triphosphate + ADP. In terms of biological role, major role in the synthesis of nucleoside triphosphates other than ATP. The ATP gamma phosphate is transferred to the NDP beta phosphate via a ping-pong mechanism, using a phosphorylated active-site intermediate. The polypeptide is Nucleoside diphosphate kinase (Thiobacillus denitrificans (strain ATCC 25259 / T1)).